A 139-amino-acid chain; its full sequence is ATP synthase epsilon chain (139 aa).

This sequence belongs to the ATPase epsilon chain family. In terms of assembly, F-type ATPases have 2 components, CF(1) - the catalytic core - and CF(0) - the membrane proton channel. CF(1) has five subunits: alpha(3), beta(3), gamma(1), delta(1), epsilon(1). CF(0) has three main subunits: a, b and c.

It is found in the cell membrane. In terms of biological role, produces ATP from ADP in the presence of a proton gradient across the membrane. This chain is ATP synthase epsilon chain, found in Ligilactobacillus salivarius (strain UCC118) (Lactobacillus salivarius).